Consider the following 222-residue polypeptide: Large ribosomal subunit protein uL4 (222 aa).

Belongs to the universal ribosomal protein uL4 family. In terms of assembly, part of the 50S ribosomal subunit.

One of the primary rRNA binding proteins, this protein initially binds near the 5'-end of the 23S rRNA. It is important during the early stages of 50S assembly. It makes multiple contacts with different domains of the 23S rRNA in the assembled 50S subunit and ribosome. In terms of biological role, forms part of the polypeptide exit tunnel. This is Large ribosomal subunit protein uL4 from Chlamydia trachomatis serovar L2 (strain ATCC VR-902B / DSM 19102 / 434/Bu).